The primary structure comprises 407 residues: Gonadotropin-releasing hormone receptor (407 aa).

Topologically, residues 1 to 36 (MDYLNDSMFNNMTYNITSTPLPDAPRFDNVYVSKLC) are extracellular. N-linked (GlcNAc...) asparagine glycans are attached at residues Asn5, Asn11, and Asn15. The helical transmembrane segment at 37 to 57 (VLGTVFVISFFGNTLVIIQIF) threads the bilayer. At 58 to 69 (RIRGSRSTIQSL) the chain is on the cytoplasmic side. A helical membrane pass occupies residues 70 to 90 (ILNLAIADLMVSFFNILMDII). The Extracellular portion of the chain corresponds to 91 to 105 (WSATVEWLAGNTMCK). Cys104 and Cys183 are joined by a disulfide. The helical transmembrane segment at 106–126 (IMKYLTVFGLHLSTYITVSIA) threads the bilayer. Residues 127-147 (LDRCFAILSPMSRSKAPLRVR) lie on the Cytoplasmic side of the membrane. Residues 148–168 (IMITMAWVLSAIFSIPQAVIF) form a helical membrane-spanning segment. Topologically, residues 169 to 199 (QEQRKMFRQGMFHQCRDSYNALWQKQLYSAS) are extracellular. Residues 200–220 (SLILLFVIPLIIMVTSYLLIL) traverse the membrane as a helical segment. Residues 221–268 (KTIVKTSRQFHDTPISPTSMSCYSVNHGQIRTHLFERARKRSSRMSAV) are Cytoplasmic-facing. Residues 269-289 (IVAAFILCWTPYYIIFLGFAF) traverse the membrane as a helical segment. Topologically, residues 290 to 298 (FQWDNSRTV) are extracellular. The chain crosses the membrane as a helical span at residues 299 to 319 (IYFFTLGTSNCMLNPLIYGAF). Over 320-407 (TIYKVHRGRS…NGKMPTKPPG (88 aa)) the chain is Cytoplasmic. The tract at residues 377-407 (SLTNPHQPVRPSPGINSTTSPNGKMPTKPPG) is disordered.

The protein belongs to the G-protein coupled receptor 1 family. Widely expressed in peripheral nervous tissue, gonadal tissue and brain. In the brain, expression is high in the palliovisceral lobe and superior buccal lobe but low in the subvertical lobe, superior and inferior frontal lobe, posterior brachial lobe and pedal lobe. Expressed in stomach, rectum, aorta, heart, salivary gland, branchia, pancreas, radula retractor muscle, branchial vessel but not in white body, esophagus, liver and kidney.

The protein localises to the cell membrane. Its function is as follows. Receptor for gonadotropin releasing hormone (GnRH) that mediates the action of GnRH to stimulate the secretion of the gonadotropic hormones luteinizing hormone (LH) and follicle-stimulating hormone (FSH). This receptor mediates its action by association with G-proteins that activate a phosphatidylinositol-calcium second messenger system. Ligand interaction triggers steroidogenesis in spermatozoa and follicles. Appears to be involved in contraction of the radula retractor muscle. This is Gonadotropin-releasing hormone receptor from Octopus vulgaris (Common octopus).